A 556-amino-acid polypeptide reads, in one-letter code: MSILNPRTSLEAGDSEDACCAAMASVCCINTKEDADSPSAGLPSGTTQNLDVEEIQGYDVEFDPPLESKYECPICLMALREAVQTPCGHRFCKACILKSLRNAGHKCPVDNEILMEKQLFPDNFAKREILSLRVKCPNLGCTDTMELRHLEHHLVQCQFASVECSQCQGSFLKLLLDKHMEHECGRRRTFCDNCGLAMAYEDKSGHELICPMAYVTCDYCQTNLIREQMPAHYSMDCTMAPIPCMYCEFGCREKMQRHNLAGHLQDFTQAHMRMMAQTLRSFSTTPTSHISDISFCDPNQFEPVPLSVAPAHPSHMPSQQDCSQETRNLRETVEQLEGRLVRQDHQIRELIAKMETQCTYVNELKHTIHSLEDKVADMDAHRCNGVFIWRIKGFSGLQKSQEEEKPVVIHSPGFYTGDPGYKLCLRLHLQLPSAQRCANYISLFVHTMQGDYDSLLPWPLQGTIRLSILDQSESTARQDQVEVMDTKPDLLAFQRPTAPRNPKGFGYVTFMHLNTLKQRQYVKNDTLLVRCSVNIHLDLTSPRREGFQPRSGEGTL.

Residues Cys72 to Asn111 form an RING-type; degenerate zinc finger. TRAF-type zinc fingers lie at residues Arg148 to Ser204 and Gly205 to Ala261. The MATH domain occupies Asn384–Val533.

This sequence belongs to the TNF receptor-associated factor family. A subfamily. As to quaternary structure, homotrimer. Homooligomer. Interacts with tifa. Highly expressed in ovary and moderately expressed in kidney, spleen, stomach, colon and testis.

It is found in the cytoplasm. Its subcellular location is the cell cortex. It localises to the nucleus. The protein resides in the lipid droplet. It carries out the reaction S-ubiquitinyl-[E2 ubiquitin-conjugating enzyme]-L-cysteine + [acceptor protein]-L-lysine = [E2 ubiquitin-conjugating enzyme]-L-cysteine + N(6)-ubiquitinyl-[acceptor protein]-L-lysine.. Its pathway is protein modification; protein ubiquitination. Functionally, E3 ubiquitin ligase that, together with UBE2N and UBE2V1, mediates the synthesis of 'Lys-63'-linked-polyubiquitin chains conjugated to proteins, such as IKBKG, IRAK1, AKT1 and AKT2. Also mediates ubiquitination of free/unanchored polyubiquitin chain that leads to MAP3K7 activation. This is TNF receptor-associated factor 6-A (traf6-a) from Xenopus laevis (African clawed frog).